The following is a 508-amino-acid chain: Pyruvate kinase 2 (508 aa).

Residue arginine 50 participates in substrate binding. K(+) contacts are provided by asparagine 52, serine 54, aspartate 85, and threonine 86. 52–55 (NFSH) contacts ATP. ATP contacts are provided by arginine 92 and lysine 178. Glutamate 243 contributes to the Mg(2+) binding site. The substrate site is built by glycine 266, aspartate 267, and threonine 299. Aspartate 267 provides a ligand contact to Mg(2+).

This sequence belongs to the pyruvate kinase family. In terms of assembly, homotetramer. Mg(2+) serves as cofactor. K(+) is required as a cofactor.

It catalyses the reaction pyruvate + ATP = phosphoenolpyruvate + ADP + H(+). The protein operates within carbohydrate degradation; glycolysis; pyruvate from D-glyceraldehyde 3-phosphate: step 5/5. This chain is Pyruvate kinase 2 (PYK2), found in Candida glabrata (strain ATCC 2001 / BCRC 20586 / JCM 3761 / NBRC 0622 / NRRL Y-65 / CBS 138) (Yeast).